Here is a 181-residue protein sequence, read N- to C-terminus: Ribosome maturation factor RimM (181 aa).

In terms of domain architecture, PRC barrel spans 99-172 (EDEFYQVDLI…FLIVDPMAAG (74 aa)).

This sequence belongs to the RimM family. As to quaternary structure, binds ribosomal protein uS19.

It localises to the cytoplasm. Its function is as follows. An accessory protein needed during the final step in the assembly of 30S ribosomal subunit, possibly for assembly of the head region. Essential for efficient processing of 16S rRNA. May be needed both before and after RbfA during the maturation of 16S rRNA. It has affinity for free ribosomal 30S subunits but not for 70S ribosomes. This is Ribosome maturation factor RimM from Bartonella tribocorum (strain CIP 105476 / IBS 506).